The sequence spans 485 residues: Homospermidine synthase (485 aa).

It belongs to the saccharopine dehydrogenase family. Requires NAD(+) as cofactor.

The catalysed reaction is 2 putrescine = sym-homospermidine + NH4(+). It carries out the reaction putrescine + spermidine = sym-homospermidine + propane-1,3-diamine. Functionally, involved in the NAD(+)-dependent synthesis of the polyamine homospermidine from putrescine. In Mesorhizobium japonicum (strain LMG 29417 / CECT 9101 / MAFF 303099) (Mesorhizobium loti (strain MAFF 303099)), this protein is Homospermidine synthase (hss).